Reading from the N-terminus, the 142-residue chain is Hemoglobin subunit alpha-2 (142 aa).

The Globin domain maps to 2-142 (VLSPADKTNV…VSTVLTSKYR (141 aa)). H59 provides a ligand contact to O2. A heme b-binding site is contributed by H88.

The protein belongs to the globin family. Heterotetramer of two alpha chains and two beta chains. In terms of tissue distribution, red blood cells.

In terms of biological role, involved in oxygen transport from the lung to the various peripheral tissues. Functionally, hemopressin acts as an antagonist peptide of the cannabinoid receptor CNR1. Hemopressin-binding efficiently blocks cannabinoid receptor CNR1 and subsequent signaling. This chain is Hemoglobin subunit alpha-2 (HBA2), found in Hylobates lar (Lar gibbon).